A 168-amino-acid chain; its full sequence is Endoribonuclease YbeY (168 aa).

Zn(2+) contacts are provided by H127, H131, and H137.

The protein belongs to the endoribonuclease YbeY family. Requires Zn(2+) as cofactor.

It localises to the cytoplasm. Its function is as follows. Single strand-specific metallo-endoribonuclease involved in late-stage 70S ribosome quality control and in maturation of the 3' terminus of the 16S rRNA. This is Endoribonuclease YbeY from Chromobacterium violaceum (strain ATCC 12472 / DSM 30191 / JCM 1249 / CCUG 213 / NBRC 12614 / NCIMB 9131 / NCTC 9757 / MK).